Consider the following 904-residue polypeptide: Dual specificity tyrosine-phosphorylation-regulated kinase mbk-1 (904 aa).

Disordered stretches follow at residues 1 to 151, 250 to 272, and 285 to 345; these read MNSG…MPPE, TVGR…ASSS, and AVPN…YNNG. Residues 9–23 show a composition bias toward polar residues; sequence NLQAWGQQPSSSYSN. A compositionally biased stretch (low complexity) spans 24–35; sequence TQQQHGQITGQI. Positions 59–75 are enriched in basic and acidic residues; it reads ELEKSKKIAEQPTEHPQ. Low complexity predominate over residues 112-123; it reads NNSNSQNFFPQQ. The segment covering 286–297 has biased composition (polar residues); the sequence is VPNTSSSGNQPH. The Protein kinase domain occupies 367 to 690; it reads ILSDTPVGKG…TLFPVSHTAY (324 aa). ATP contacts are provided by residues 373-381 and lysine 396; that span reads VGKGSFGQV. The active-site Proton acceptor is aspartate 495. 2 disordered regions span residues 717 to 830 and 881 to 904; these read YRPV…DQAE and MSHG…NNKL. The segment covering 721–733 has biased composition (polar residues); that stretch reads PTSSHPISVTSSF. Over residues 749-820 the composition is skewed to low complexity; that stretch reads SQQNYHNPNY…VQQHSSSSSR (72 aa). A compositionally biased stretch (polar residues) spans 881–890; that stretch reads MSHGNVNAGS. The segment covering 892–904 has biased composition (basic and acidic residues); it reads RDMEKHDYPNNKL.

Belongs to the protein kinase superfamily. CMGC Ser/Thr protein kinase family. MNB/DYRK subfamily. Mg(2+) serves as cofactor.

The protein resides in the nucleus. The enzyme catalyses L-seryl-[protein] + ATP = O-phospho-L-seryl-[protein] + ADP + H(+). It carries out the reaction L-threonyl-[protein] + ATP = O-phospho-L-threonyl-[protein] + ADP + H(+). It catalyses the reaction L-tyrosyl-[protein] + ATP = O-phospho-L-tyrosyl-[protein] + ADP + H(+). Possible role in the function of olfactory neurons. The sequence is that of Dual specificity tyrosine-phosphorylation-regulated kinase mbk-1 from Caenorhabditis briggsae.